Reading from the N-terminus, the 148-residue chain is uncharacterized protein (148 aa).

Positions 4–65 constitute an HTH asnC-type domain; the sequence is LDKVDIQLVK…IPDLDKLGYM (62 aa). The H-T-H motif DNA-binding region spans 23 to 42; the sequence is YRELAELMNTTRQRIARRIT.

This is an uncharacterized protein from Pyrococcus abyssi (strain GE5 / Orsay).